The following is a 119-amino-acid chain: Large ribosomal subunit protein uL18 (119 aa).

The segment at 1-26 (MGQNDKAARRQKIKLRSKTRGQGTAA) is disordered. The span at 9–19 (RRQKIKLRSKT) shows a compositional bias: basic residues.

It belongs to the universal ribosomal protein uL18 family. Part of the 50S ribosomal subunit; part of the 5S rRNA/L5/L18/L25 subcomplex. Contacts the 5S and 23S rRNAs.

Functionally, this is one of the proteins that bind and probably mediate the attachment of the 5S RNA into the large ribosomal subunit, where it forms part of the central protuberance. The chain is Large ribosomal subunit protein uL18 from Prosthecochloris aestuarii (strain DSM 271 / SK 413).